Here is a 181-residue protein sequence, read N- to C-terminus: Endoribonuclease YbeY (181 aa).

Zn(2+)-binding residues include His-120, His-124, and His-130. The segment at 157-181 (AGGKRPAGGADGADGAGEPGPTAAR) is disordered. The span at 161 to 174 (RPAGGADGADGAGE) shows a compositional bias: gly residues.

Belongs to the endoribonuclease YbeY family. Zn(2+) serves as cofactor.

Its subcellular location is the cytoplasm. Its function is as follows. Single strand-specific metallo-endoribonuclease involved in late-stage 70S ribosome quality control and in maturation of the 3' terminus of the 16S rRNA. This chain is Endoribonuclease YbeY, found in Frankia alni (strain DSM 45986 / CECT 9034 / ACN14a).